A 427-amino-acid chain; its full sequence is UPF0229 protein YeaH (427 aa).

Residues 79-90 (NDHFVQNDRIER) are compositionally biased toward basic and acidic residues. The tract at residues 79–110 (NDHFVQNDRIERPQGGGGGSGSGQGQASQDGE) is disordered. Residues 92–102 (QGGGGGSGSGQ) show a composition bias toward gly residues.

Belongs to the UPF0229 family.

The sequence is that of UPF0229 protein YeaH from Escherichia coli O127:H6 (strain E2348/69 / EPEC).